The following is a 163-amino-acid chain: MAFGEPPSGHSTRHRTLHGLSFHTAMGMAWSLHYQGQGGTLCLVGVSTPSHDKAVLQGLPHFSVNLGVQPSALAGRRGDASCPSSWRSADPTVSPNLGAPGGPNAIDALHGEQLGLFLRTKMGRDPKDVHGLTPALCGPCLAGLPSSHSPQFSCNTAPLKMLS.

This is an uncharacterized protein from Homo sapiens (Human).